The primary structure comprises 178 residues: Large ribosomal subunit protein uL5 (178 aa).

Belongs to the universal ribosomal protein uL5 family. As to quaternary structure, part of the 50S ribosomal subunit; part of the 5S rRNA/L5/L18/L25 subcomplex. Contacts the 5S rRNA and the P site tRNA. Forms a bridge to the 30S subunit in the 70S ribosome.

Functionally, this is one of the proteins that bind and probably mediate the attachment of the 5S RNA into the large ribosomal subunit, where it forms part of the central protuberance. In the 70S ribosome it contacts protein S13 of the 30S subunit (bridge B1b), connecting the 2 subunits; this bridge is implicated in subunit movement. Contacts the P site tRNA; the 5S rRNA and some of its associated proteins might help stabilize positioning of ribosome-bound tRNAs. The sequence is that of Large ribosomal subunit protein uL5 from Wolbachia pipientis subsp. Culex pipiens (strain wPip).